A 289-amino-acid chain; its full sequence is Shikimate dehydrogenase (NADP(+)) (289 aa).

Residues 19 to 21 and threonine 66 contribute to the shikimate site; that span reads SLS. Lysine 70 (proton acceptor) is an active-site residue. Shikimate is bound by residues asparagine 91 and aspartate 106. Residues 131–135 and leucine 229 contribute to the NADP(+) site; that span reads GNGGA. Tyrosine 231 lines the shikimate pocket. An NADP(+)-binding site is contributed by glycine 252.

It belongs to the shikimate dehydrogenase family. In terms of assembly, homodimer.

The catalysed reaction is shikimate + NADP(+) = 3-dehydroshikimate + NADPH + H(+). The protein operates within metabolic intermediate biosynthesis; chorismate biosynthesis; chorismate from D-erythrose 4-phosphate and phosphoenolpyruvate: step 4/7. Its function is as follows. Involved in the biosynthesis of the chorismate, which leads to the biosynthesis of aromatic amino acids. Catalyzes the reversible NADPH linked reduction of 3-dehydroshikimate (DHSA) to yield shikimate (SA). This chain is Shikimate dehydrogenase (NADP(+)), found in Trichormus variabilis (strain ATCC 29413 / PCC 7937) (Anabaena variabilis).